Consider the following 81-residue polypeptide: Beta-defensin 34 (81 aa).

A signal peptide spans 1–20; the sequence is MKTFLFLFAVLFFWSQPRMH. Cystine bridges form between C28/C55, C35/C49, and C39/C56. A compositionally biased stretch (polar residues) spans 62–72; the sequence is CGRSKGNQSDE. The segment at 62–81 is disordered; it reads CGRSKGNQSDEGSGHMGTRG.

This sequence belongs to the beta-defensin family. Only expressed in epididymis (caput, corpus and cauda).

The protein localises to the secreted. Its function is as follows. Has antibacterial activity. This is Beta-defensin 34 (Defb34) from Mus musculus (Mouse).